We begin with the raw amino-acid sequence, 377 residues long: Chaperone protein DnaJ (377 aa).

One can recognise a J domain in the interval 5–70 (DYYEILGVAK…QKRAAYDQFG (66 aa)). The segment at 130-208 (GTEVKIRVPS…CHGQGRVEEH (79 aa)) adopts a CR-type zinc-finger fold. C143, C146, C160, C163, C182, C185, C196, and C199 together coordinate Zn(2+). CXXCXGXG motif repeat units follow at residues 143 to 150 (CGECHGSG), 160 to 167 (CGTCGGVG), 182 to 189 (CPRCHGTG), and 196 to 203 (CKACHGQG).

It belongs to the DnaJ family. As to quaternary structure, homodimer. Zn(2+) serves as cofactor.

It localises to the cytoplasm. Its function is as follows. Participates actively in the response to hyperosmotic and heat shock by preventing the aggregation of stress-denatured proteins and by disaggregating proteins, also in an autonomous, DnaK-independent fashion. Unfolded proteins bind initially to DnaJ; upon interaction with the DnaJ-bound protein, DnaK hydrolyzes its bound ATP, resulting in the formation of a stable complex. GrpE releases ADP from DnaK; ATP binding to DnaK triggers the release of the substrate protein, thus completing the reaction cycle. Several rounds of ATP-dependent interactions between DnaJ, DnaK and GrpE are required for fully efficient folding. Also involved, together with DnaK and GrpE, in the DNA replication of plasmids through activation of initiation proteins. The protein is Chaperone protein DnaJ of Thioalkalivibrio sulfidiphilus (strain HL-EbGR7).